A 442-amino-acid chain; its full sequence is ATP-dependent RNA helicase SUB2 (442 aa).

A Q motif motif is present at residues 59-87 (TGFRDFLLKGELLRAITDCGFEHPSEVQQ). The region spanning 90–265 (IPTAILNVDV…KKFMRNPLEV (176 aa)) is the Helicase ATP-binding domain. 103–110 (AKSGLGKT) serves as a coordination point for ATP. The short motif at 212–215 (DECD) is the DECD box element. In terms of domain architecture, Helicase C-terminal spans 293–438 (KLNELLDSLE…EYPQGGVDSS (146 aa)).

This sequence belongs to the DEAD box helicase family. DECD subfamily.

The protein resides in the nucleus. It catalyses the reaction ATP + H2O = ADP + phosphate + H(+). ATP-binding RNA helicase involved in transcription elongation and required for the export of mRNA out of the nucleus. SUB2 also plays a role in pre-mRNA splicing and spliceosome assembly. May be involved in rDNA and telomeric silencing, and maintenance of genome integrity. The sequence is that of ATP-dependent RNA helicase SUB2 (SUB2) from Ajellomyces capsulatus (strain NAm1 / WU24) (Darling's disease fungus).